Here is a 131-residue protein sequence, read N- to C-terminus: MSWQTYVDEHLMCEIDGQHLTAAAIIGHEGGIWAQSDSFPQVKPEQTAAIMRDFAEPGSLAPTGLFLGDGKYMVIQGEPGAVIRGKKGSGGVTIKKTNMALIVGIYDEPMTPGQCNMVVERLGDYLYDQGF.

This sequence belongs to the profilin family. Occurs in many kinds of cells as a complex with monomeric actin in a 1:1 ratio.

The protein resides in the cytoplasm. Its subcellular location is the cytoskeleton. Its function is as follows. Binds to actin and affects the structure of the cytoskeleton. At high concentrations, profilin prevents the polymerization of actin, whereas it enhances it at low concentrations. By binding to PIP2, it inhibits the formation of IP3 and DG. The protein is Profilin-3 of Lilium longiflorum (Trumpet lily).